We begin with the raw amino-acid sequence, 947 residues long: Bifunctional glutamine synthetase adenylyltransferase/adenylyl-removing enzyme (947 aa).

Residues 1–440 are adenylyl removase; it reads MTPLSSPLSQ…VFNELIGDDE (440 aa). The tract at residues 450-947 is adenylyl transferase; the sequence is SEPWRDVWQD…ASWRKWLVAV (498 aa).

This sequence belongs to the GlnE family. It depends on Mg(2+) as a cofactor.

It carries out the reaction [glutamine synthetase]-O(4)-(5'-adenylyl)-L-tyrosine + phosphate = [glutamine synthetase]-L-tyrosine + ADP. It catalyses the reaction [glutamine synthetase]-L-tyrosine + ATP = [glutamine synthetase]-O(4)-(5'-adenylyl)-L-tyrosine + diphosphate. Its function is as follows. Involved in the regulation of glutamine synthetase GlnA, a key enzyme in the process to assimilate ammonia. When cellular nitrogen levels are high, the C-terminal adenylyl transferase (AT) inactivates GlnA by covalent transfer of an adenylyl group from ATP to specific tyrosine residue of GlnA, thus reducing its activity. Conversely, when nitrogen levels are low, the N-terminal adenylyl removase (AR) activates GlnA by removing the adenylyl group by phosphorolysis, increasing its activity. The regulatory region of GlnE binds the signal transduction protein PII (GlnB) which indicates the nitrogen status of the cell. This Salmonella dublin (strain CT_02021853) protein is Bifunctional glutamine synthetase adenylyltransferase/adenylyl-removing enzyme.